Here is a 163-residue protein sequence, read N- to C-terminus: Phosphopantetheine adenylyltransferase (163 aa).

Ser-9 is a substrate binding site. ATP is bound by residues 9–10 (SF) and His-17. The substrate site is built by Lys-41, Ile-75, and Arg-89. Residues 90-92 (GIR), Glu-100, and 125-131 (HLYVRSD) contribute to the ATP site.

The protein belongs to the bacterial CoaD family. As to quaternary structure, homohexamer. The cofactor is Mg(2+).

The protein resides in the cytoplasm. The enzyme catalyses (R)-4'-phosphopantetheine + ATP + H(+) = 3'-dephospho-CoA + diphosphate. It functions in the pathway cofactor biosynthesis; coenzyme A biosynthesis; CoA from (R)-pantothenate: step 4/5. Reversibly transfers an adenylyl group from ATP to 4'-phosphopantetheine, yielding dephospho-CoA (dPCoA) and pyrophosphate. The protein is Phosphopantetheine adenylyltransferase of Borreliella burgdorferi (strain ZS7) (Borrelia burgdorferi).